The following is a 230-amino-acid chain: MRKPSITITTAKAIITPDYTLIKSHSKYQLPSRFQKLDADSPERSTVVKLFYRRFMRLKPFISNVKMVKDTYRDYVRYKFMKENYELKRYLVFNPDGLRSKINLELLSNTKCCERILPVTEMQRTLEFVLKSCSYLPETKVQKWDIARDNTYCRQILKNLLTMQYEKYRSILHRGIGHDELDVKFSHLKTTSSPLTKLNKTEKKKIPLFKVFSDFDTTLIYLNETLGTRL.

The protein belongs to the IRC19 family.

Its function is as follows. Involved in sporulation and maintenance of the mitochondrial DNA. Is probably involved in a pathway contributing to genomic integrity. The polypeptide is Increased recombination centers protein 19 (IRC19) (Saccharomyces cerevisiae (strain ATCC 204508 / S288c) (Baker's yeast)).